Reading from the N-terminus, the 69-residue chain is UPF0346 protein llmg_2280 (69 aa).

Belongs to the UPF0346 family.

The polypeptide is UPF0346 protein llmg_2280 (Lactococcus lactis subsp. cremoris (strain MG1363)).